A 446-amino-acid chain; its full sequence is Packaging protein 1 (446 aa).

Basic residues predominate over residues M1–F10. A disordered region spans residues M1–L74. G170–S177 contributes to the ATP binding site. The DNA-binding stretch occupies residues R439–K446.

Belongs to the adenoviridae packaging protein 1 family. Homodimer. Part of a genome packaging complex composed of packaging proteins 1, 2 and 3; this complex specifically binds to the packaging sequence on the left end of viral genomic DNA and performs packaging of the viral genome. Interacts with protein 33K.

The protein localises to the virion. Its subcellular location is the host nucleus. It is found in the host nucleoplasm. It localises to the host nucleolus. Functionally, component of the packaging machinery which encapsidates the viral DNA into preformed capsids and transcriptional activator of the viral major late promoter (MLP). Binds, along with packaging proteins 2 and 3, to the specific packaging sequence on the left end of viral genomic DNA and displays ATPase activity thereby providing the power stroke of the packaging machinery. The activity of packaging protein IVa2 is stimulated by protein 33K which acts as a terminase. May be the protein that pumps DNA into the capsid powered by ATP hydrolysis. Specifically binds to the 5'-CG-3' nucleotides of the repeats making up the packaging sequence. Component of the DEF-A and DEF-B transcription factors that bind downstream elements of the major late promoter (MLP), and stimulate transcription from the MLP after initiation of viral DNA replication. DEF-A is a heterodimer packaging proteins 1 and 2 and DEF-B is a homodimer of packaging protein 1. The chain is Packaging protein 1 from Human adenovirus F serotype 40 (HAdV-40).